Here is a 272-residue protein sequence, read N- to C-terminus: MEMTQSSNHIVVIKLGGSVLDSKDTSLKDIATLKQLGLKPVLIHGGASTVSAWSAKLGLETRLVNGERVTDDATLDVVAAILAGLVNKEIVAALLDMGIKAAGISGVDSATITGQIRATETGYLGDVVQVNTELITALLDANITPVISPVSFHQINRPSGSRRLLNINGDPVAGEIASALQAERLVFLTDVPAVKGKNGEALGEISADHAAELLASGTASGGMIPKLRSCLKATLAGSSACIIDGRKPHMLIRELTEGNCGTTVTGQHLRRS.

Substrate-binding positions include 46–47 (GA), arginine 68, and asparagine 166.

Belongs to the acetylglutamate kinase family. ArgB subfamily.

It localises to the cytoplasm. The catalysed reaction is N-acetyl-L-glutamate + ATP = N-acetyl-L-glutamyl 5-phosphate + ADP. It participates in amino-acid biosynthesis; L-arginine biosynthesis; N(2)-acetyl-L-ornithine from L-glutamate: step 2/4. In terms of biological role, catalyzes the ATP-dependent phosphorylation of N-acetyl-L-glutamate. The chain is Acetylglutamate kinase from Dehalococcoides mccartyi (strain CBDB1).